Consider the following 151-residue polypeptide: UPF0208 membrane protein PC1_2779 (151 aa).

The next 2 helical transmembrane spans lie at 46–66 and 69–89; these read FGIR…IALG and LGPA…GLWW.

This sequence belongs to the UPF0208 family.

The protein localises to the cell inner membrane. The protein is UPF0208 membrane protein PC1_2779 of Pectobacterium carotovorum subsp. carotovorum (strain PC1).